We begin with the raw amino-acid sequence, 65 residues long: Small ribosomal subunit protein bS21B (65 aa).

Belongs to the bacterial ribosomal protein bS21 family.

In Francisella tularensis subsp. holarctica (strain LVS), this protein is Small ribosomal subunit protein bS21B.